The primary structure comprises 236 residues: MRQHVNPLSRFFQLPRPLPSPEEMFAQSSRPLHLDIGCARGGFLLGLAPLQPEWNHVGVEIRHPLVLSAERDRQELKLDNLRFLFCNVNVSLEEWLDALPRDQLQWVSIQFPDPWFKRRHQKRRVLQPSLLIALATALQPGRELFIQSDVLSVIEPMVMLIEQSNCFKRPGDDFHPWQRTNPMPVPTERERYVLDQGLQVYRRLYQRNDQQAPELSNLEALWQQVDNPSEEEHSDC.

Residues D35, E60, N87, and D113 each coordinate S-adenosyl-L-methionine. D113 is a catalytic residue. K117 and D149 together coordinate substrate.

It belongs to the class I-like SAM-binding methyltransferase superfamily. TrmB family.

The catalysed reaction is guanosine(46) in tRNA + S-adenosyl-L-methionine = N(7)-methylguanosine(46) in tRNA + S-adenosyl-L-homocysteine. Its pathway is tRNA modification; N(7)-methylguanine-tRNA biosynthesis. Catalyzes the formation of N(7)-methylguanine at position 46 (m7G46) in tRNA. This is tRNA (guanine-N(7)-)-methyltransferase from Prochlorococcus marinus (strain MIT 9303).